A 471-amino-acid polypeptide reads, in one-letter code: Trimethyllysine dioxygenase (471 aa).

Residues histidine 251 and aspartate 253 each contribute to the Fe cation site. A disordered region spans residues 272-302 (KAAPSRPPPPPPPPPPPSEEKEAAGSAAGEA). Positions 276-288 (SRPPPPPPPPPPP) are enriched in pro residues. Histidine 430 is a Fe cation binding site.

The protein belongs to the gamma-BBH/TMLD family. Fe(2+) is required as a cofactor. It depends on L-ascorbate as a cofactor.

The protein resides in the cytoplasm. It carries out the reaction N(6),N(6),N(6)-trimethyl-L-lysine + 2-oxoglutarate + O2 = (3S)-3-hydroxy-N(6),N(6),N(6)-trimethyl-L-lysine + succinate + CO2. It participates in amine and polyamine biosynthesis; carnitine biosynthesis. Converts trimethyllysine (TML) into hydroxytrimethyllysine (HTML). This Neurospora crassa (strain ATCC 24698 / 74-OR23-1A / CBS 708.71 / DSM 1257 / FGSC 987) protein is Trimethyllysine dioxygenase (cbs-1).